A 245-amino-acid polypeptide reads, in one-letter code: MDDTSTLTDVKEYPDTEVQKNRVLTLEEWREKWVDGKIGFHQEQGHQLLKKHLDTFLKGENVLRVFFPLCGKAVEMKWFADRGHCVVGVEISELGIREFFTEQNLSYSEEPIMEIPGAKVFKSSSGNISLYCCNLFDLPRVNIGKFDRIWDRGALVAVNPGDRKCYTDIMLSLTRKGFRYLLAVLSYDPTKHPGPPFYVPDAEIKNLFGSTCNIHCLEKVDVFEERHKSWGIDYIVEKLYLLTEK.

Position 29 to 40 (29 to 40 (WREKWVDGKIGF)) interacts with S-adenosyl-L-methionine. A substrate-binding site is contributed by Phe-40. Lys-58 is subject to N6-acetyllysine. S-adenosyl-L-methionine contacts are provided by Leu-69, Glu-90, and Arg-152.

Belongs to the class I-like SAM-binding methyltransferase superfamily. TPMT family. Monomer.

It is found in the cytoplasm. The enzyme catalyses S-adenosyl-L-methionine + a thiopurine = S-adenosyl-L-homocysteine + a thiopurine S-methylether.. The chain is Thiopurine S-methyltransferase (TPMT) from Felis catus (Cat).